A 355-amino-acid chain; its full sequence is 3-dehydroquinate synthase (355 aa).

Residues 69–74, 103–107, 127–128, Lys-140, Lys-149, and 167–170 each bind NAD(+); these read DGEQHK, GVIGD, TT, and TLQT. Zn(2+) is bound by residues Glu-182, His-245, and His-262.

Belongs to the sugar phosphate cyclases superfamily. Dehydroquinate synthase family. The cofactor is Co(2+). It depends on Zn(2+) as a cofactor. NAD(+) is required as a cofactor.

The protein localises to the cytoplasm. The enzyme catalyses 7-phospho-2-dehydro-3-deoxy-D-arabino-heptonate = 3-dehydroquinate + phosphate. The protein operates within metabolic intermediate biosynthesis; chorismate biosynthesis; chorismate from D-erythrose 4-phosphate and phosphoenolpyruvate: step 2/7. Functionally, catalyzes the conversion of 3-deoxy-D-arabino-heptulosonate 7-phosphate (DAHP) to dehydroquinate (DHQ). The protein is 3-dehydroquinate synthase of Pseudoalteromonas atlantica (strain T6c / ATCC BAA-1087).